Consider the following 181-residue polypeptide: Peptidyl-prolyl cis-trans isomerase H (181 aa).

The PPIase cyclophilin-type domain maps to 17–180 (FFDITLGGES…QDVTIIQCGE (164 aa)).

This sequence belongs to the cyclophilin-type PPIase family. PPIase H subfamily.

The protein resides in the nucleus. It carries out the reaction [protein]-peptidylproline (omega=180) = [protein]-peptidylproline (omega=0). In terms of biological role, PPIases accelerate the folding of proteins. It catalyzes the cis-trans isomerization of proline imidic peptide bonds in oligopeptides. This Aspergillus oryzae (strain ATCC 42149 / RIB 40) (Yellow koji mold) protein is Peptidyl-prolyl cis-trans isomerase H (cyp3).